A 409-amino-acid polypeptide reads, in one-letter code: Dual-specificity RNA methyltransferase RlmN (409 aa).

Glu126 (proton acceptor) is an active-site residue. The Radical SAM core domain occupies 132–373 (EEGRGTLCLS…NQAGYASPIR (242 aa)). Cys139 and Cys384 are joined by a disulfide. 3 residues coordinate [4Fe-4S] cluster: Cys146, Cys150, and Cys153. S-adenosyl-L-methionine contacts are provided by residues 210 to 211 (GE), Ser242, 264 to 266 (SLH), and Asn341. Cys384 functions as the S-methylcysteine intermediate in the catalytic mechanism.

The protein belongs to the radical SAM superfamily. RlmN family. The cofactor is [4Fe-4S] cluster.

Its subcellular location is the cytoplasm. It catalyses the reaction adenosine(2503) in 23S rRNA + 2 reduced [2Fe-2S]-[ferredoxin] + 2 S-adenosyl-L-methionine = 2-methyladenosine(2503) in 23S rRNA + 5'-deoxyadenosine + L-methionine + 2 oxidized [2Fe-2S]-[ferredoxin] + S-adenosyl-L-homocysteine. The catalysed reaction is adenosine(37) in tRNA + 2 reduced [2Fe-2S]-[ferredoxin] + 2 S-adenosyl-L-methionine = 2-methyladenosine(37) in tRNA + 5'-deoxyadenosine + L-methionine + 2 oxidized [2Fe-2S]-[ferredoxin] + S-adenosyl-L-homocysteine. Its function is as follows. Specifically methylates position 2 of adenine 2503 in 23S rRNA and position 2 of adenine 37 in tRNAs. m2A2503 modification seems to play a crucial role in the proofreading step occurring at the peptidyl transferase center and thus would serve to optimize ribosomal fidelity. The polypeptide is Dual-specificity RNA methyltransferase RlmN (Bartonella quintana (strain Toulouse) (Rochalimaea quintana)).